Here is a 210-residue protein sequence, read N- to C-terminus: Protein RFS1 (210 aa).

The Flavodoxin-like domain occupies Val4 to Phe203.

The protein belongs to the WrbA family.

It localises to the cytoplasm. It is found in the membrane raft. The protein is Protein RFS1 (RFS1) of Saccharomyces cerevisiae (strain ATCC 204508 / S288c) (Baker's yeast).